Reading from the N-terminus, the 270-residue chain is Glutamate racemase (270 aa).

Substrate-binding positions include 13-14 (DS) and 45-46 (YG). C77 acts as the Proton donor/acceptor in catalysis. 78–79 (NT) contributes to the substrate binding site. C185 functions as the Proton donor/acceptor in the catalytic mechanism. 186–187 (TH) contributes to the substrate binding site.

Belongs to the aspartate/glutamate racemases family.

It catalyses the reaction L-glutamate = D-glutamate. Its pathway is cell wall biogenesis; peptidoglycan biosynthesis. Functionally, provides the (R)-glutamate required for cell wall biosynthesis. The chain is Glutamate racemase from Vibrio parahaemolyticus serotype O3:K6 (strain RIMD 2210633).